Reading from the N-terminus, the 373-residue chain is Arfaptin-1 (373 aa).

The segment at 1–47 (MAQESPKNSAAEIPVTSNGEVDDSREHSFNRDLKHSLPSGLGLSETQ) is disordered. A2 is modified (N-acetylalanine). Phosphoserine occurs at positions 5, 28, 36, 39, 69, 79, and 132. Basic and acidic residues predominate over residues 22–35 (DDSREHSFNRDLKH). Residues 153–353 (TVDLELEAQI…NQKQLEQTLK (201 aa)) form the AH domain. T361 is subject to Phosphothreonine.

As to quaternary structure, forms homodimers or heterodimers with ARFIP2. Interacts with non-myristoylated GTP-bound ARF3, but not to GDP-bound ARF3. Interacts with ARF1. Binds with lower affinity to ARF5 and with very little affinity to ARF6. Interacts with ARL1. Interacts with ATG9A. In terms of processing, phosphorylated by PRKD1; phosphorylation delocalizes ARFIP1 from the Golgi and disrupts its ability to inhibit the activity of ADP-ribosylation factor, an important component of the vesicle scission machinery. As to expression, ubiquitously expressed. Higher levels in liver, pancreas, placenta, skeletal muscle and heart.

It is found in the golgi apparatus. The protein localises to the trans-Golgi network membrane. In terms of biological role, plays a role in controlling biogenesis of secretory granules at the trans-Golgi network. Mechanistically, binds ARF-GTP at the neck of a growing secretory granule precursor and forms a protective scaffold. Once the granule precursor has been completely loaded, active PRKD1 phosphorylates ARFIP1 and releases it from ARFs. In turn, ARFs induce fission. Through this mechanism, ensures proper secretory granule formation at the Golgi of pancreatic beta cells. The sequence is that of Arfaptin-1 from Homo sapiens (Human).